Consider the following 133-residue polypeptide: Small ribosomal subunit protein uS9 (133 aa).

The span at 95 to 113 (GDSKQELKSRGFLTRDPRK) shows a compositional bias: basic and acidic residues. The interval 95–133 (GDSKQELKSRGFLTRDPRKKERKKYGHKKARKSFQFSKR) is disordered. Basic residues predominate over residues 114–133 (KERKKYGHKKARKSFQFSKR).

It belongs to the universal ribosomal protein uS9 family.

This Chlamydia felis (strain Fe/C-56) (Chlamydophila felis) protein is Small ribosomal subunit protein uS9.